The following is a 769-amino-acid chain: Protein lethal(2)denticleless (769 aa).

6 WD repeats span residues 99-129, 143-174, 194-249, 264-303, 320-349, and 362-393; these read CHFNAVFDLEWAPGQMRFVSASGDHTARLWE, GHTRSVKSAAFKRTDPAVFATGGRDGAILIWD, GHTG…KVWD, RHKLPYAGSSTFRGFTNLIVDASGTRLYANCMDNTIYCYN, NSTFYIKSCLSPDGKYLLSGSSDERAYIWN, and GHTVEVTCVAWGSSHDCPIVTCSDDARHKIWR. The interval 196 to 221 is disordered; sequence TGGPGTPVSQRKQRTRTPKMAGGTTS. T201 is subject to Phosphothreonine. At S204 the chain carries Phosphoserine. 3 disordered regions span residues 448 to 467, 476 to 562, and 655 to 769; these read RLMDQNERTPGSVEKTTTKR, AGQE…HVYT, and SPRL…VGSD. T456 bears the Phosphothreonine mark. S459 carries the post-translational modification Phosphoserine. Residues 503-518 are compositionally biased toward polar residues; sequence PSSQETACRHIQLQSI. Phosphoserine is present on S524. Residues 524–533 show a composition bias toward basic and acidic residues; sequence SPSKRQKENS. The span at 546 to 562 shows a compositional bias: polar residues; sequence STPSHSPLSENVNHVYT. Residue S655 is modified to Phosphoserine. Polar residues predominate over residues 657-666; sequence RLQSLRQSEC. A phosphoserine mark is found at S679, S691, and S711. The segment covering 689 to 704 has biased composition (low complexity); that stretch reads AGSSSHSHSQSQPKTP. Polar residues predominate over residues 705–714; it reads TSSRRNSETT. Positions 728–743 are enriched in low complexity; the sequence is PAEETTTTNAAPSSSD. The segment covering 758 to 769 has biased composition (polar residues); the sequence is SMRTPTTAVGSD.

The protein belongs to the WD repeat cdt2 family. In terms of assembly, component of the DCX(DTL) E3 ubiquitin ligase complex, at least composed of Cul-4, pic/DDB1, l(2)dtl/CDT2 and Roc1a. As to expression, ubiquitously expressed during embryogenesis with no sign of tissue specificity in expression up to stage 17.

The protein localises to the cytoplasm. The protein operates within protein modification; protein ubiquitination. Substrate-specific adapter of a DCX (DDB1-CUL4-X-box) E3 ubiquitin-protein ligase complex required for cell cycle control. The DCX(DTL) complex, also named CRL4(CDT2) complex, mediates the polyubiquitination and subsequent degradation of E2f during S phase. E2f degradation is necessary to ensure proper development. Substrates require their interaction with PCNA for their polyubiquitination: substrates interact with PCNA via their PIP-box, leading to recruit the DCX(DTL) complex. The chain is Protein lethal(2)denticleless (l(2)dtl) from Drosophila melanogaster (Fruit fly).